The primary structure comprises 193 residues: Rho-related GTP-binding protein RhoA-D (193 aa).

GTP contacts are provided by residues 12–19 (GDGACGKT), 30–37 (FPEVYVPT), 59–63 (DTAGQ), 117–120 (NKKD), and 160–162 (SAK). The (Microbial infection) O-linked (GlcNAc) tyrosine; by Yersinia Afp18 glycan is linked to Y34. A Cysteine methyl ester modification is found at C190. The S-geranylgeranyl cysteine moiety is linked to residue C190. A propeptide spans 191–193 (LLL) (removed in mature form).

It belongs to the small GTPase superfamily. Rho family. In terms of processing, (Microbial infection) Glycosylated at Tyr-34 by Yersinia ruckeri toxin Afp18. Mono-O-GlcNAcylation by Afp18 inhibits RhoA activation by guanine nucleotide exchange factors and blocks RhoA signaling.

The protein localises to the cell membrane. Regulates a signal transduction pathway linking plasma membrane receptors to the assembly of focal adhesions and actin stress fibers. This Danio rerio (Zebrafish) protein is Rho-related GTP-binding protein RhoA-D.